Reading from the N-terminus, the 184-residue chain is Photosystem I assembly protein Ycf4 (184 aa).

2 consecutive transmembrane segments (helical) span residues 22–42 (FCWA…GISS) and 57–77 (ILFF…LFIS).

It belongs to the Ycf4 family.

The protein localises to the plastid. Its subcellular location is the chloroplast thylakoid membrane. Its function is as follows. Seems to be required for the assembly of the photosystem I complex. This chain is Photosystem I assembly protein Ycf4, found in Populus trichocarpa (Western balsam poplar).